Here is a 507-residue protein sequence, read N- to C-terminus: RNA-binding protein Nova-1 (507 aa).

The tract at residues 1 to 44 is disordered; the sequence is MMAAAPIQQNGTHTGVPIDLDPPDSRKRPLEAPPEAGSTKRTNT. The Bipartite nuclear localization signal signature appears at 27–43; that stretch reads KRPLEAPPEAGSTKRTN. A KH 1 domain is found at 49 to 116; sequence QYFLKVLIPS…EALNAVHGFI (68 aa). The segment at 139-171 is disordered; sequence QTTVNPDRIKQTLPSSPTTTKSSPSDPMTTSRA. Residues 150–169 are compositionally biased toward low complexity; that stretch reads TLPSSPTTTKSSPSDPMTTS. Phosphoserine is present on S154. KH domains follow at residues 171-237 and 421-488; these read ANQV…VELI and KDVV…QYLI. The required for RNA binding stretch occupies residues 419-503; that stretch reads GSKDVVEIAV…YEQGVRAANP (85 aa).

Interacts with PTBP2; the interaction is direct. Expressed in cerebellum, brain stem, hippocampus, and frontal cortex.

It localises to the nucleus. In terms of biological role, functions to regulate alternative splicing in neurons by binding pre-mRNA in a sequence-specific manner to activate exon inclusion or exclusion. It binds specifically to the sequences 5'-YCAY-3' and regulates splicing in only a subset of regulated exons. Binding to an exonic 5'-YCAY-3' cluster changes the protein complexes assembled on pre-mRNA, blocking U1 snRNP binding and exon inclusion, whereas binding to an intronic 5'-YCAY-3' cluster enhances spliceosome assembly and exon inclusion. Binding to 5'-YCAY-3' clusters results in a local and asymmetric action to regulate spliceosome assembly and alternative splicing in neurons. Binding to an exonic 5'-YCAY-3' cluster changed the protein complexes assembled on pre-mRNA, blocking U1 snRNP (small nuclear ribonucleoprotein) binding and exon inclusion, whereas binding to an intronic 5'-YCAY-3' cluster enhanced spliceosome assembly and exon inclusion. With NOVA1, they perform unique biological functions in different brain areas and cell types. Autoregulates its own expression by acting as a splicing repressor. Acts to activate the inclusion of exon E3A in the glycine receptor alpha-2 chain and of exon E9 in gamma-aminobutyric-acid receptor gamma-2 subunit via a distal downstream UCAU-rich intronic splicing enhancer. Acts to regulate a novel glycine receptor alpha-2 chain splice variant (alpha-2N) in developing spinal cord. The chain is RNA-binding protein Nova-1 from Homo sapiens (Human).